Consider the following 311-residue polypeptide: Asialoglycoprotein receptor 2 (311 aa).

The interval 1-44 is disordered; that stretch reads MAKDFQDIQQLSSEENDHPFHQGEGPGTRRLNPRRGNPFLKGPP. At 1-58 the chain is on the cytoplasmic side; the sequence is MAKDFQDIQQLSSEENDHPFHQGEGPGTRRLNPRRGNPFLKGPPPAQPLAQRLCSMVC. The Endocytosis signal motif lies at 5–8; the sequence is FQDI. The residue at position 13 (Ser13) is a Phosphoserine. Cys54 carries S-palmitoyl cysteine lipidation. Residues 59–79 traverse the membrane as a helical; Signal-anchor for type II membrane protein segment; the sequence is FSLLALSFNILLLVVICVTGS. Residues 80 to 311 lie on the Extracellular side of the membrane; sequence QSEGHGGAQL…KRRNATGEVA (232 aa). N-linked (GlcNAc...) asparagine glycosylation is found at Asn102 and Asn170. Residues 176 to 302 form the C-type lectin domain; it reads CCPVNWVEHQ…LQVYRWVCEK (127 aa). 3 disulfide bridges follow: Cys177–Cys188, Cys205–Cys300, and Cys278–Cys292. An N-linked (GlcNAc...) asparagine glycan is attached at Asn305.

The functioning ligand-binding unit of this receptor is thought to be at least a dimer. Interacts with LASS2. As to quaternary structure, (Microbial infection) Interacts with hepatitis E virus capsid protein ORF2. As to expression, expressed exclusively in hepatic parenchymal cells.

It is found in the membrane. Its function is as follows. Mediates the endocytosis of plasma glycoproteins to which the terminal sialic acid residue on their complex carbohydrate moieties has been removed. The receptor recognizes terminal galactose and N-acetylgalactosamine units. After ligand binding to the receptor, the resulting complex is internalized and transported to a sorting organelle, where receptor and ligand are disassociated. The receptor then returns to the cell membrane surface. The chain is Asialoglycoprotein receptor 2 (ASGR2) from Homo sapiens (Human).